The primary structure comprises 189 residues: Peptidyl-tRNA hydrolase (189 aa).

Residue Y14 coordinates tRNA. The active-site Proton acceptor is H19. TRNA is bound by residues Y64, N66, and N112.

Belongs to the PTH family. As to quaternary structure, monomer.

The protein resides in the cytoplasm. The catalysed reaction is an N-acyl-L-alpha-aminoacyl-tRNA + H2O = an N-acyl-L-amino acid + a tRNA + H(+). Functionally, hydrolyzes ribosome-free peptidyl-tRNAs (with 1 or more amino acids incorporated), which drop off the ribosome during protein synthesis, or as a result of ribosome stalling. Its function is as follows. Catalyzes the release of premature peptidyl moieties from peptidyl-tRNA molecules trapped in stalled 50S ribosomal subunits, and thus maintains levels of free tRNAs and 50S ribosomes. This chain is Peptidyl-tRNA hydrolase, found in Finegoldia magna (strain ATCC 29328 / DSM 20472 / WAL 2508) (Peptostreptococcus magnus).